A 154-amino-acid polypeptide reads, in one-letter code: Transcription antitermination protein NusB (154 aa).

It belongs to the NusB family.

Functionally, involved in transcription antitermination. Required for transcription of ribosomal RNA (rRNA) genes. Binds specifically to the boxA antiterminator sequence of the ribosomal RNA (rrn) operons. The chain is Transcription antitermination protein NusB from Hyphomonas neptunium (strain ATCC 15444).